The following is a 173-amino-acid chain: Glutamyl-tRNA(Gln) amidotransferase subunit C-1, mitochondrial (173 aa).

A mitochondrion-targeting transit peptide spans 1–23; sequence MIRIPFRLRPPPGRTLHSLVRTF. The disordered stretch occupies residues 51 to 70; sequence PSKVPQRPHKSTTTVGQSTP. A compositionally biased stretch (polar residues) spans 61 to 70; it reads STTTVGQSTP.

Belongs to the GatC family. In terms of assembly, subunit of the heterotrimeric GatCAB amidotransferase (AdT) complex, composed of A, B and C subunits.

It localises to the mitochondrion. The catalysed reaction is L-glutamyl-tRNA(Gln) + L-glutamine + ATP + H2O = L-glutaminyl-tRNA(Gln) + L-glutamate + ADP + phosphate + H(+). Its function is as follows. Allows the formation of correctly charged Gln-tRNA(Gln) through the transamidation of misacylated Glu-tRNA(Gln) in the mitochondria. The reaction takes place in the presence of glutamine and ATP through an activated gamma-phospho-Glu-tRNA(Gln). The protein is Glutamyl-tRNA(Gln) amidotransferase subunit C-1, mitochondrial of Culex quinquefasciatus (Southern house mosquito).